An 83-amino-acid chain; its full sequence is UPF0297 protein CLK_1948 (83 aa).

The protein belongs to the UPF0297 family.

This Clostridium botulinum (strain Loch Maree / Type A3) protein is UPF0297 protein CLK_1948.